A 73-amino-acid chain; its full sequence is UPF0154 protein MG335.1 (73 aa).

The helical transmembrane segment at 6-26 (LALGLGIPLSLLVGMILGYFI) threads the bilayer.

Belongs to the UPF0154 family.

The protein localises to the membrane. This Mycoplasma genitalium (strain ATCC 33530 / DSM 19775 / NCTC 10195 / G37) (Mycoplasmoides genitalium) protein is UPF0154 protein MG335.1.